Here is an 89-residue protein sequence, read N- to C-terminus: 10 kDa fusion protein (89 aa).

Positions 1–29 (MDENDGENLLTQPDDTGNSTNGVYAAGAP) are disordered. The span at 9–22 (LLTQPDDTGNSTNG) shows a compositional bias: polar residues. N-linked (GlcNAc...) asparagine; by host glycosylation is present at Asn-18.

It belongs to the poxviruses fusion protein family. As to quaternary structure, homotrimer, covalently linked.

It is found in the virion membrane. The polypeptide is 10 kDa fusion protein (Capra hircus (Goat)).